We begin with the raw amino-acid sequence, 515 residues long: GMP synthase [glutamine-hydrolyzing] (515 aa).

The Glutamine amidotransferase type-1 domain maps to 10 to 200; that stretch reads TIIVLDFGSQ…VFGVCGCSEG (191 aa). Catalysis depends on cysteine 87, which acts as the Nucleophile. Catalysis depends on residues histidine 174 and glutamate 176. In terms of domain architecture, GMPS ATP-PPase spans 201–390; that stretch reads WNMENFIEVE…LGIPDEIVWR (190 aa). ATP is bound at residue 228 to 234; the sequence is SGGVDSS.

As to quaternary structure, homodimer.

It carries out the reaction XMP + L-glutamine + ATP + H2O = GMP + L-glutamate + AMP + diphosphate + 2 H(+). It functions in the pathway purine metabolism; GMP biosynthesis; GMP from XMP (L-Gln route): step 1/1. Functionally, catalyzes the synthesis of GMP from XMP. The sequence is that of GMP synthase [glutamine-hydrolyzing] from Bacillus cereus (strain ATCC 14579 / DSM 31 / CCUG 7414 / JCM 2152 / NBRC 15305 / NCIMB 9373 / NCTC 2599 / NRRL B-3711).